A 369-amino-acid chain; its full sequence is UDP-glucose 4-epimerase 4 (369 aa).

Thr19–Leu50 lines the NAD(+) pocket. Ser144 provides a ligand contact to substrate. The Proton acceptor role is filled by Tyr168.

This sequence belongs to the NAD(P)-dependent epimerase/dehydratase family. It depends on NAD(+) as a cofactor.

It carries out the reaction UDP-alpha-D-glucose = UDP-alpha-D-galactose. The protein operates within carbohydrate metabolism; galactose metabolism. Its function is as follows. Catalyzes the interconversion between UDP-glucose and UDP-galactose. The sequence is that of UDP-glucose 4-epimerase 4 (UGE-4) from Oryza sativa subsp. japonica (Rice).